We begin with the raw amino-acid sequence, 589 residues long: PTS system mannitol-specific EIICB component (589 aa).

Residues 1-25 (MERKSSLKVRVQKLGTSLSNMVMPN) are Cytoplasmic-facing. The PTS EIIC type-2 domain maps to 14 to 347 (LGTSLSNMVM…ILKSDNSDDD (334 aa)). The chain crosses the membrane as a helical span at residues 26–47 (IGAFIAWGVAASLFIATGYLPN). At 48–51 (KALD) the chain is on the extracellular side. The helical transmembrane segment at 52–73 (TNVVGPMLKYVLPLLIGYTGGY) threads the bilayer. Residues 74–136 (NIHKQRGGVI…TGFEMLVNNF (63 aa)) lie on the Cytoplasmic side of the membrane. The helical transmembrane segment at 137-158 (SLGLIGFALMVLAFFVIGPVVA) threads the bilayer. Residues 159–167 (QLTEWVGIG) lie on the Extracellular side of the membrane. A helical transmembrane segment spans residues 168–188 (VEAIVKVHLLPLANLIIEPAK). Over 189–275 (ILFLNNALNH…VMMKPAMFLA (87 aa)) the chain is Cytoplasmic. The chain crosses the membrane as a helical span at residues 276 to 295 (VIAGGLTGTFTFQTLGAGLT). Residues 296–317 (APASPGSIIAIMGMSPKGWGPH) are Extracellular-facing. Residues 318–339 (LVVLAGVFAAAVASFLVASIIL) form a helical membrane-spanning segment. The Cytoplasmic portion of the chain corresponds to 340 to 589 (KSDNSDDDSL…YDKLVARMHK (250 aa)). Residues 383-478 (HQIIFACDAG…SLTNGKASGS (96 aa)) enclose the PTS EIIB type-2 domain. The active-site Phosphocysteine intermediate; for EIIB activity is the Cys389. Cys389 carries the phosphocysteine; by EIIA modification.

As to quaternary structure, homodimer.

It localises to the cell membrane. The catalysed reaction is D-mannitol(out) + N(pros)-phospho-L-histidyl-[protein] = D-mannitol 1-phosphate(in) + L-histidyl-[protein]. In terms of biological role, the phosphoenolpyruvate-dependent sugar phosphotransferase system (sugar PTS), a major carbohydrate active transport system, catalyzes the phosphorylation of incoming sugar substrates concomitantly with their translocation across the cell membrane. The enzyme II CmtAB PTS system is involved in D-mannitol transport. This chain is PTS system mannitol-specific EIICB component, found in Streptococcus mutans serotype c (strain ATCC 700610 / UA159).